A 522-amino-acid chain; its full sequence is Probable protein kinase UbiB (522 aa).

The 379-residue stretch at 119–497 (SFERVPVASA…QRRTNRLLQS (379 aa)) folds into the Protein kinase domain. ATP contacts are provided by residues 125 to 133 (VASASIAQV) and Lys151. The active-site Proton acceptor is Asp286. A helical membrane pass occupies residues 496 to 516 (QSIIYGGMGFVLGLLALQFLI).

It belongs to the ABC1 family. UbiB subfamily.

Its subcellular location is the cell inner membrane. Its pathway is cofactor biosynthesis; ubiquinone biosynthesis [regulation]. In terms of biological role, is probably a protein kinase regulator of UbiI activity which is involved in aerobic coenzyme Q (ubiquinone) biosynthesis. In Paracidovorax citrulli (strain AAC00-1) (Acidovorax citrulli), this protein is Probable protein kinase UbiB.